Reading from the N-terminus, the 362-residue chain is Outer membrane porin protein OmpD (362 aa).

Residues 1–21 (MKLKLVAVAVTSLLAAGVVNA) form the signal peptide.

Belongs to the Gram-negative porin family. In terms of assembly, homotrimer.

The protein resides in the cell outer membrane. Functionally, forms pores that allow passive diffusion of small molecules across the outer membrane. In Salmonella choleraesuis (strain SC-B67), this protein is Outer membrane porin protein OmpD (ompD).